The following is a 101-amino-acid chain: UPF0060 membrane protein ACIAD1364 (101 aa).

The next 3 helical transmembrane spans lie at 24–44 (WLWL…TLHP), 50–70 (IYAA…RFID), and 79–99 (IWGG…PQGL).

Belongs to the UPF0060 family.

Its subcellular location is the cell inner membrane. The polypeptide is UPF0060 membrane protein ACIAD1364 (Acinetobacter baylyi (strain ATCC 33305 / BD413 / ADP1)).